The following is a 549-amino-acid chain: Glucose-6-phosphate isomerase (549 aa).

E355 serves as the catalytic Proton donor. Catalysis depends on residues H386 and K514.

The protein belongs to the GPI family.

It is found in the cytoplasm. The catalysed reaction is alpha-D-glucose 6-phosphate = beta-D-fructose 6-phosphate. Its pathway is carbohydrate biosynthesis; gluconeogenesis. The protein operates within carbohydrate degradation; glycolysis; D-glyceraldehyde 3-phosphate and glycerone phosphate from D-glucose: step 2/4. Its function is as follows. Catalyzes the reversible isomerization of glucose-6-phosphate to fructose-6-phosphate. The chain is Glucose-6-phosphate isomerase from Aeromonas salmonicida (strain A449).